The chain runs to 492 residues: UDP-N-acetylmuramoyl-L-alanyl-D-glutamate--2,6-diaminopimelate ligase (492 aa).

S30 provides a ligand contact to UDP-N-acetyl-alpha-D-muramoyl-L-alanyl-D-glutamate. Residue G114–S120 participates in ATP binding. Residues T156–T157, S183, Q189, and R191 each bind UDP-N-acetyl-alpha-D-muramoyl-L-alanyl-D-glutamate. K223 carries the N6-carboxylysine modification. Residues R389, D413–R416, G462, and E466 contribute to the meso-2,6-diaminopimelate site. Residues D413 to R416 carry the Meso-diaminopimelate recognition motif motif.

Belongs to the MurCDEF family. MurE subfamily. It depends on Mg(2+) as a cofactor. Carboxylation is probably crucial for Mg(2+) binding and, consequently, for the gamma-phosphate positioning of ATP.

The protein localises to the cytoplasm. The enzyme catalyses UDP-N-acetyl-alpha-D-muramoyl-L-alanyl-D-glutamate + meso-2,6-diaminopimelate + ATP = UDP-N-acetyl-alpha-D-muramoyl-L-alanyl-gamma-D-glutamyl-meso-2,6-diaminopimelate + ADP + phosphate + H(+). It functions in the pathway cell wall biogenesis; peptidoglycan biosynthesis. In terms of biological role, catalyzes the addition of meso-diaminopimelic acid to the nucleotide precursor UDP-N-acetylmuramoyl-L-alanyl-D-glutamate (UMAG) in the biosynthesis of bacterial cell-wall peptidoglycan. The sequence is that of UDP-N-acetylmuramoyl-L-alanyl-D-glutamate--2,6-diaminopimelate ligase from Neisseria meningitidis serogroup B (strain ATCC BAA-335 / MC58).